We begin with the raw amino-acid sequence, 206 residues long: ATP synthase subunit b (206 aa).

Residues 10 to 30 traverse the membrane as a helical segment; that stretch reads LLKPFVSTAAICLLVAGTVVL.

Belongs to the ATPase B chain family. As to quaternary structure, F-type ATPases have 2 components, F(1) - the catalytic core - and F(0) - the membrane proton channel. F(1) has five subunits: alpha(3), beta(3), gamma(1), delta(1), epsilon(1). F(0) has three main subunits: a(1), b(2) and c(10-14). The alpha and beta chains form an alternating ring which encloses part of the gamma chain. F(1) is attached to F(0) by a central stalk formed by the gamma and epsilon chains, while a peripheral stalk is formed by the delta and b chains.

Its subcellular location is the cell inner membrane. Its function is as follows. F(1)F(0) ATP synthase produces ATP from ADP in the presence of a proton or sodium gradient. F-type ATPases consist of two structural domains, F(1) containing the extramembraneous catalytic core and F(0) containing the membrane proton channel, linked together by a central stalk and a peripheral stalk. During catalysis, ATP synthesis in the catalytic domain of F(1) is coupled via a rotary mechanism of the central stalk subunits to proton translocation. In terms of biological role, component of the F(0) channel, it forms part of the peripheral stalk, linking F(1) to F(0). The chain is ATP synthase subunit b from Geobacter sulfurreducens (strain ATCC 51573 / DSM 12127 / PCA).